Here is a 37-residue protein sequence, read N- to C-terminus: Large ribosomal subunit protein bL36c (37 aa).

This sequence belongs to the bacterial ribosomal protein bL36 family.

It is found in the plastid. Its subcellular location is the chloroplast. In Lepidium virginicum (Virginia pepperweed), this protein is Large ribosomal subunit protein bL36c.